The chain runs to 252 residues: Chlorophyll a-b binding protein P4, chloroplastic (252 aa).

Trp56 provides a ligand contact to chlorophyll b. Chlorophyll a contacts are provided by Phe76 and Glu95. Residue Arg100 coordinates chlorophyll b. A run of 2 helical transmembrane segments spans residues 101-121 and 134-154; these read WAML…IGII and YFAS…YVEI. 4 residues coordinate chlorophyll b: Ser137, Val143, Glu153, and Arg156. Residues Lys203, Glu204, Asn207, Arg209, Gln221, and His236 each contribute to the chlorophyll a site.

Belongs to the light-harvesting chlorophyll a/b-binding (LHC) protein family. The LHC complex consists of chlorophyll a-b binding proteins. The cofactor is Binds at least 14 chlorophylls (8 Chl-a and 6 Chl-b) and carotenoids such as lutein and neoxanthin.. Post-translationally, photoregulated by reversible phosphorylation of its threonine residues.

The protein localises to the plastid. It is found in the chloroplast thylakoid membrane. The light-harvesting complex (LHC) functions as a light receptor, it captures and delivers excitation energy to photosystems with which it is closely associated. Its function is as follows. May channel protons produced in the catalytic Mn center of water oxidation into the thylakoid lumen. The protein is Chlorophyll a-b binding protein P4, chloroplastic of Pisum sativum (Garden pea).